Consider the following 671-residue polypeptide: ABC transporter ATP-binding protein/permease wht-1 (671 aa).

Residues methionine 1–asparagine 408 are Cytoplasmic-facing. An ABC transporter domain is found at threonine 64–alanine 310. Glycine 100 to threonine 107 serves as a coordination point for ATP. A helical transmembrane segment spans residues leucine 409–phenylalanine 429. At glutamine 430–asparagine 451 the chain is on the extracellular side. A helical transmembrane segment spans residues methionine 452 to leucine 472. At arginine 473 to tyrosine 497 the chain is on the cytoplasmic side. Residues isoleucine 498 to phenylalanine 518 traverse the membrane as a helical segment. Residues tryptophan 519–serine 525 lie on the Extracellular side of the membrane. Residues leucine 526 to phenylalanine 546 traverse the membrane as a helical segment. At alanine 547–aspartate 550 the chain is on the cytoplasmic side. Residues valine 551 to isoleucine 571 traverse the membrane as a helical segment. The Extracellular portion of the chain corresponds to threonine 572 to aspartate 644. The chain crosses the membrane as a helical span at residues isoleucine 645–isoleucine 665. The Cytoplasmic portion of the chain corresponds to arginine 666–threonine 671.

This sequence belongs to the ABC transporter superfamily. ABCG family. Eye pigment precursor importer (TC 3.A.1.204) subfamily. In terms of tissue distribution, expressed in the intestine in both larvae and adults. Expressed in the gut of males.

It localises to the membrane. In terms of biological role, required for efficient RNA interference (RNAi). Plays a role in germline development. The sequence is that of ABC transporter ATP-binding protein/permease wht-1 from Caenorhabditis elegans.